The chain runs to 102 residues: Protein translation factor SUI1 homolog (102 aa).

Belongs to the SUI1 family.

The polypeptide is Protein translation factor SUI1 homolog (Nitrosopumilus maritimus (strain SCM1)).